The following is a 433-amino-acid chain: GTPase Obg (433 aa).

Residues 4 to 162 enclose the Obg domain; it reads EDFVDRVTIF…RWLELELKLL (159 aa). Residues 163 to 334 form the OBG-type G domain; the sequence is ADAGLIGFPN…LKQKIFEIVG (172 aa). Residues 169 to 176, 194 to 198, 216 to 219, 286 to 289, and 315 to 317 contribute to the GTP site; these read GFPNVGKS, FTTLV, DIPG, NKID, and SAL. 2 residues coordinate Mg(2+): serine 176 and threonine 196. An OCT domain is found at 356–433; it reads TKIEERFDFE…IGQYSFEYKE (78 aa).

Belongs to the TRAFAC class OBG-HflX-like GTPase superfamily. OBG GTPase family. Monomer. The cofactor is Mg(2+).

It localises to the cytoplasm. Functionally, an essential GTPase which binds GTP, GDP and possibly (p)ppGpp with moderate affinity, with high nucleotide exchange rates and a fairly low GTP hydrolysis rate. Plays a role in control of the cell cycle, stress response, ribosome biogenesis and in those bacteria that undergo differentiation, in morphogenesis control. The chain is GTPase Obg from Pseudothermotoga lettingae (strain ATCC BAA-301 / DSM 14385 / NBRC 107922 / TMO) (Thermotoga lettingae).